A 999-amino-acid chain; its full sequence is Signal peptide, CUB and EGF-like domain-containing protein 2 (999 aa).

Positions Met-1–Ala-31 are cleaved as a signal peptide. Residues Asp-45–Glu-85 enclose the EGF-like 1; calcium-binding domain. Disulfide bonds link Cys-49–Cys-62, Cys-56–Cys-71, Cys-73–Cys-84, Cys-90–Cys-102, Cys-98–Cys-111, and Cys-113–Cys-126. Residues Asp-86–Leu-127 enclose the EGF-like 2; calcium-binding domain. In terms of domain architecture, EGF-like 3; calcium-binding spans Asp-128–Ile-168. 3 EGF-like domains span residues Cys-177–Cys-213, Cys-217–Cys-252, and Cys-286–Cys-321. In terms of domain architecture, EGF-like 7; calcium-binding spans Asp-323–Gln-363. Positions Asp-364–Gly-402 constitute an EGF-like 8; calcium-binding domain. Disulfide bonds link Cys-368–Cys-378, Cys-374–Cys-387, Cys-389–Cys-401, Cys-407–Cys-418, Cys-414–Cys-427, and Cys-429–Cys-442. The EGF-like 9; calcium-binding domain maps to Asp-403 to Val-443. Asn-659 carries an N-linked (GlcNAc...) asparagine glycan. Cys-809 and Cys-835 are disulfide-bonded. The CUB domain occupies Cys-809–Tyr-921. The interaction with the cholesterol-anchor of SHH stretch occupies residues Ile-847–Leu-856. Residues Cys-862 and Cys-883 are joined by a disulfide bond.

As to quaternary structure, forms homooligomers. Forms heterooligomers with SCUBE1. Forms heterooligomers with SCUBE3. Interacts with SHH via the cholesterol anchor of the dually lipid-modified SHH (ShhNp). Interacts with PTCH1. Interacts with VEGFR2. In terms of processing, N-glycosylated. As to expression, expressed in a broad spectrum of adult tissues.

The protein localises to the secreted. It is found in the cell surface. In terms of biological role, lipid-binding protein required for SHH long-range signaling by binding to the dually lipid-modified SHH (ShhNp) and by promoting ShhNp mobilization, solubilization and release from the cell membrane. Acts by enhancing the proteolytic processing (shedding) of the lipid-modified N- and C- terminal of ShhNp at the cell surface. Synergizes with DISP1 to increase SHH secretion. Probable cell surface coreceptor for VEGFR2 involved in VEGFR2-mediated angiogenesis. This Homo sapiens (Human) protein is Signal peptide, CUB and EGF-like domain-containing protein 2.